The sequence spans 143 residues: Endoribonuclease YbeY (143 aa).

3 residues coordinate Zn(2+): histidine 106, histidine 110, and histidine 116.

It belongs to the endoribonuclease YbeY family. Zn(2+) serves as cofactor.

Its subcellular location is the cytoplasm. Single strand-specific metallo-endoribonuclease involved in late-stage 70S ribosome quality control and in maturation of the 3' terminus of the 16S rRNA. The protein is Endoribonuclease YbeY of Petrotoga mobilis (strain DSM 10674 / SJ95).